The chain runs to 92 residues: Defensin-like protein 226 (92 aa).

Residues 1–27 (MKCGVLFMISCLLITFLVLSHVREVES) form the signal peptide. 4 disulfides stabilise this stretch: Cys33-Cys92, Cys43-Cys71, Cys51-Cys86, and Cys69-Cys88.

The protein belongs to the DEFL family.

It is found in the secreted. This chain is Defensin-like protein 226 (SCRL2), found in Arabidopsis thaliana (Mouse-ear cress).